Here is a 197-residue protein sequence, read N- to C-terminus: FMN-dependent NADH:quinone oxidoreductase (197 aa).

FMN-binding positions include Ser10, Ser16–Ser18, Met93–Phe96, and Thr137–Gly140.

It belongs to the azoreductase type 1 family. Homodimer. It depends on FMN as a cofactor.

It catalyses the reaction 2 a quinone + NADH + H(+) = 2 a 1,4-benzosemiquinone + NAD(+). The enzyme catalyses N,N-dimethyl-1,4-phenylenediamine + anthranilate + 2 NAD(+) = 2-(4-dimethylaminophenyl)diazenylbenzoate + 2 NADH + 2 H(+). Quinone reductase that provides resistance to thiol-specific stress caused by electrophilic quinones. Functionally, also exhibits azoreductase activity. Catalyzes the reductive cleavage of the azo bond in aromatic azo compounds to the corresponding amines. This chain is FMN-dependent NADH:quinone oxidoreductase, found in Shewanella loihica (strain ATCC BAA-1088 / PV-4).